A 71-amino-acid chain; its full sequence is Translation initiation factor IF-1 (71 aa).

Positions 1 to 71 (MSKDDLIQFT…LTKGRVIHRH (71 aa)) constitute an S1-like domain.

It belongs to the IF-1 family. As to quaternary structure, component of the 30S ribosomal translation pre-initiation complex which assembles on the 30S ribosome in the order IF-2 and IF-3, IF-1 and N-formylmethionyl-tRNA(fMet); mRNA recruitment can occur at any time during PIC assembly.

Its subcellular location is the cytoplasm. Functionally, one of the essential components for the initiation of protein synthesis. Stabilizes the binding of IF-2 and IF-3 on the 30S subunit to which N-formylmethionyl-tRNA(fMet) subsequently binds. Helps modulate mRNA selection, yielding the 30S pre-initiation complex (PIC). Upon addition of the 50S ribosomal subunit IF-1, IF-2 and IF-3 are released leaving the mature 70S translation initiation complex. In Rickettsia prowazekii (strain Madrid E), this protein is Translation initiation factor IF-1.